A 198-amino-acid chain; its full sequence is Nucleoid occlusion factor SlmA (198 aa).

Residues 9–70 form the HTH tetR-type domain; sequence RNRREEILQS…SLIEFIEDSL (62 aa). The H-T-H motif DNA-binding region spans 33–52; the sequence is TTAKLAASVGVSEAALYRHF. The stretch at 117–145 forms a coiled coil; the sequence is EQDRLQGRINQLFERIEAQLRQVLREKKM.

It belongs to the nucleoid occlusion factor SlmA family. As to quaternary structure, homodimer. Interacts with FtsZ.

Its subcellular location is the cytoplasm. The protein localises to the nucleoid. Its function is as follows. Required for nucleoid occlusion (NO) phenomenon, which prevents Z-ring formation and cell division over the nucleoid. Acts as a DNA-associated cell division inhibitor that binds simultaneously chromosomal DNA and FtsZ, and disrupts the assembly of FtsZ polymers. SlmA-DNA-binding sequences (SBS) are dispersed on non-Ter regions of the chromosome, preventing FtsZ polymerization at these regions. This is Nucleoid occlusion factor SlmA from Cronobacter sakazakii (strain ATCC BAA-894) (Enterobacter sakazakii).